A 246-amino-acid polypeptide reads, in one-letter code: O-antigen export system ATP-binding protein RfbB (246 aa).

The 225-residue stretch at 22-246 (SGIKDLIFHP…IIELYKQAMA (225 aa)) folds into the ABC transporter domain. Residue 63–70 (GRNGAGKS) coordinates ATP.

It belongs to the ABC transporter superfamily.

Its subcellular location is the cell inner membrane. May form an ATP-driven O-antigen export apparatus, in association with RfbA. In Klebsiella pneumoniae, this protein is O-antigen export system ATP-binding protein RfbB (rfbB).